Here is a 772-residue protein sequence, read N- to C-terminus: Nudix hydrolase 3 (772 aa).

A compositionally biased stretch (basic and acidic residues) spans 1–14 (MAEEHFDVLTKSGE). The segment at 1–25 (MAEEHFDVLTKSGEKTGVSKPRGEV) is disordered. The Nudix hydrolase domain maps to 30-172 (DYHRAVHVWI…DPAYVPYDVN (143 aa)). The Nudix box signature appears at 69–90 (GHISAGDTSLLSAQRELEEELG). Glu-84 and Glu-88 together coordinate Mg(2+).

It belongs to the Nudix hydrolase family. The cofactor is Mg(2+). It depends on Mn(2+) as a cofactor. As to expression, expressed in roots, stems and, at lower level, leaves.

Functionally, probably mediates the hydrolysis of some nucleoside diphosphate derivatives. In Arabidopsis thaliana (Mouse-ear cress), this protein is Nudix hydrolase 3 (NUDT3).